We begin with the raw amino-acid sequence, 151 residues long: Cytochrome c-type biogenesis protein CcmE (151 aa).

Residues 1–9 lie on the Cytoplasmic side of the membrane; it reads MKGLKKKRR. Residues 10 to 30 traverse the membrane as a helical; Signal-anchor for type II membrane protein segment; sequence IQIITLAFVALAGSTALIGYA. Residues 31–151 are Periplasmic-facing; the sequence is MRDGINFFRS…FQHTEDQPQG (121 aa). Residues His123 and Tyr127 each coordinate heme.

This sequence belongs to the CcmE/CycJ family.

It is found in the cell inner membrane. Its function is as follows. Heme chaperone required for the biogenesis of c-type cytochromes. Transiently binds heme delivered by CcmC and transfers the heme to apo-cytochromes in a process facilitated by CcmF and CcmH. This Cereibacter sphaeroides (strain ATCC 17025 / ATH 2.4.3) (Rhodobacter sphaeroides) protein is Cytochrome c-type biogenesis protein CcmE.